The chain runs to 90 residues: Small ribosomal subunit protein uS15c (90 aa).

It belongs to the universal ribosomal protein uS15 family. Part of the 30S ribosomal subunit.

The protein resides in the plastid. It is found in the chloroplast. In Brachypodium distachyon (Purple false brome), this protein is Small ribosomal subunit protein uS15c (rps15-A).